A 507-amino-acid chain; its full sequence is ATP synthase subunit alpha, chloroplastic (507 aa).

170-177 contributes to the ATP binding site; the sequence is GDRQTGKT.

The protein belongs to the ATPase alpha/beta chains family. In terms of assembly, F-type ATPases have 2 components, CF(1) - the catalytic core - and CF(0) - the membrane proton channel. CF(1) has five subunits: alpha(3), beta(3), gamma(1), delta(1), epsilon(1). CF(0) has four main subunits: a, b, b' and c.

Its subcellular location is the plastid. It is found in the chloroplast thylakoid membrane. The catalysed reaction is ATP + H2O + 4 H(+)(in) = ADP + phosphate + 5 H(+)(out). Produces ATP from ADP in the presence of a proton gradient across the membrane. The alpha chain is a regulatory subunit. This chain is ATP synthase subunit alpha, chloroplastic, found in Atropa belladonna (Belladonna).